Here is a 308-residue protein sequence, read N- to C-terminus: Testis-expressed protein 52 (308 aa).

Expressed in Testis.

This chain is Testis-expressed protein 52, found in Mus musculus (Mouse).